The primary structure comprises 232 residues: Ion-translocating oxidoreductase complex subunit E (232 aa).

6 helical membrane passes run alanine 18–glycine 38, leucine 39–isoleucine 59, isoleucine 69–alanine 89, glutamate 93–glycine 113, alanine 128–methionine 148, and proline 182–alanine 202.

This sequence belongs to the NqrDE/RnfAE family. In terms of assembly, the complex is composed of six subunits: RnfA, RnfB, RnfC, RnfD, RnfE and RnfG.

Its subcellular location is the cell inner membrane. Part of a membrane-bound complex that couples electron transfer with translocation of ions across the membrane. The chain is Ion-translocating oxidoreductase complex subunit E from Pseudoalteromonas atlantica (strain T6c / ATCC BAA-1087).